We begin with the raw amino-acid sequence, 124 residues long: MNNVLYIAAGGAIGAVLRYSISILALQLFGTGFPFGTLIVNVAGSFLMGCIYALAELSHIGPEWKALIGVGLLGALTTFSTFSNETLLLLQQGELVKASLNVLLNLILCLTVVYLGQQLIYSRV.

4 helical membrane passes run 4-24 (VLYI…ISIL), 35-55 (FGTL…YALA), 60-80 (IGPE…TTFS), and 100-120 (LNVL…QQLI). Residues glycine 74 and threonine 77 each contribute to the Na(+) site.

It belongs to the fluoride channel Fluc/FEX (TC 1.A.43) family.

It is found in the cell inner membrane. The catalysed reaction is fluoride(in) = fluoride(out). With respect to regulation, na(+) is not transported, but it plays an essential structural role and its presence is essential for fluoride channel function. Functionally, fluoride-specific ion channel. Important for reducing fluoride concentration in the cell, thus reducing its toxicity. The sequence is that of Fluoride-specific ion channel FluC from Shewanella amazonensis (strain ATCC BAA-1098 / SB2B).